A 178-amino-acid polypeptide reads, in one-letter code: Large ribosomal subunit protein uL6 (178 aa).

Belongs to the universal ribosomal protein uL6 family. Part of the 50S ribosomal subunit.

This protein binds to the 23S rRNA, and is important in its secondary structure. It is located near the subunit interface in the base of the L7/L12 stalk, and near the tRNA binding site of the peptidyltransferase center. This Limosilactobacillus fermentum (strain NBRC 3956 / LMG 18251) (Lactobacillus fermentum) protein is Large ribosomal subunit protein uL6.